Consider the following 439-residue polypeptide: 23S rRNA (uracil(1939)-C(5))-methyltransferase RlmD (439 aa).

The TRAM domain maps to 10–68 (QKKLRAAFTTIVQDLDYQGLGVAKIQGKTWFIENALPQEQVQVQVIEEKRQYGLGRVQK). 4 residues coordinate [4Fe-4S] cluster: Cys81, Cys87, Cys90, and Cys168. 6 residues coordinate S-adenosyl-L-methionine: Gln271, Phe300, Asn305, Glu321, Asp348, and Asp369. The Nucleophile role is filled by Cys395.

This sequence belongs to the class I-like SAM-binding methyltransferase superfamily. RNA M5U methyltransferase family. RlmD subfamily.

It carries out the reaction uridine(1939) in 23S rRNA + S-adenosyl-L-methionine = 5-methyluridine(1939) in 23S rRNA + S-adenosyl-L-homocysteine + H(+). Catalyzes the formation of 5-methyl-uridine at position 1939 (m5U1939) in 23S rRNA. The sequence is that of 23S rRNA (uracil(1939)-C(5))-methyltransferase RlmD from Histophilus somni (strain 129Pt) (Haemophilus somnus).